Here is a 1416-residue protein sequence, read N- to C-terminus: DNA-directed RNA polymerase subunit beta' (1416 aa).

C71, C73, C86, and C89 together coordinate Zn(2+). Residues D461, D463, and D465 each contribute to the Mg(2+) site. Positions 815, 889, 896, and 899 each coordinate Zn(2+).

Belongs to the RNA polymerase beta' chain family. In terms of assembly, the RNAP catalytic core consists of 2 alpha, 1 beta, 1 beta' and 1 omega subunit. When a sigma factor is associated with the core the holoenzyme is formed, which can initiate transcription. Requires Mg(2+) as cofactor. Zn(2+) is required as a cofactor.

The enzyme catalyses RNA(n) + a ribonucleoside 5'-triphosphate = RNA(n+1) + diphosphate. Functionally, DNA-dependent RNA polymerase catalyzes the transcription of DNA into RNA using the four ribonucleoside triphosphates as substrates. The sequence is that of DNA-directed RNA polymerase subunit beta' from Haemophilus influenzae (strain PittEE).